We begin with the raw amino-acid sequence, 512 residues long: Ribose import ATP-binding protein RbsA 2 (512 aa).

ABC transporter domains follow at residues 7–242 (LEIR…VGRE) and 257–498 (LGEP…SGIG). Position 39–46 (39–46 (GENGAGKS)) interacts with ATP.

This sequence belongs to the ABC transporter superfamily. Ribose importer (TC 3.A.1.2.1) family. As to quaternary structure, the complex is composed of an ATP-binding protein (RbsA), two transmembrane proteins (RbsC) and a solute-binding protein (RbsB).

It is found in the cell inner membrane. The enzyme catalyses D-ribose(out) + ATP + H2O = D-ribose(in) + ADP + phosphate + H(+). Part of the ABC transporter complex RbsABC involved in ribose import. Responsible for energy coupling to the transport system. This chain is Ribose import ATP-binding protein RbsA 2, found in Rhizobium meliloti (strain 1021) (Ensifer meliloti).